The sequence spans 272 residues: uncharacterized protein (272 aa).

The interval 101–130 (CPTGKKNKAPSSLIPKISKTSTSSLTKEDE) is disordered. Residues 110–125 (PSSLIPKISKTSTSSL) are compositionally biased toward low complexity. Ser142 is subject to Phosphoserine.

This is an uncharacterized protein from Arabidopsis thaliana (Mouse-ear cress).